The following is a 206-amino-acid chain: Large ribosomal subunit protein uL3 (206 aa).

Belongs to the universal ribosomal protein uL3 family. Part of the 50S ribosomal subunit. Forms a cluster with proteins L14 and L19.

In terms of biological role, one of the primary rRNA binding proteins, it binds directly near the 3'-end of the 23S rRNA, where it nucleates assembly of the 50S subunit. This is Large ribosomal subunit protein uL3 from Thermus thermophilus (strain ATCC BAA-163 / DSM 7039 / HB27).